The primary structure comprises 337 residues: Phosphate acyltransferase (337 aa).

This sequence belongs to the PlsX family. In terms of assembly, homodimer. Probably interacts with PlsY.

It localises to the cytoplasm. It catalyses the reaction a fatty acyl-[ACP] + phosphate = an acyl phosphate + holo-[ACP]. Its pathway is lipid metabolism; phospholipid metabolism. Its function is as follows. Catalyzes the reversible formation of acyl-phosphate (acyl-PO(4)) from acyl-[acyl-carrier-protein] (acyl-ACP). This enzyme utilizes acyl-ACP as fatty acyl donor, but not acyl-CoA. The sequence is that of Phosphate acyltransferase from Moritella marina (Vibrio marinus).